The sequence spans 461 residues: Cyclic AMP-responsive element-binding protein 3-like protein 3 (461 aa).

Residues 1–322 (MNTDLAAGKM…STSKSAQTGT (322 aa)) lie on the Cytoplasmic side of the membrane. The disordered stretch occupies residues 51-120 (DQQVLPNPDS…AGCHPAQPGK (70 aa)). The span at 63-85 (FLSSILGSGDSLPSSPLWSPEGS) shows a compositional bias: low complexity. The residue at position 173 (Ser173) is a Phosphoserine. Residues 243 to 306 (VLKKIRRKIR…LSLLEQLKKL (64 aa)) enclose the bZIP domain. A basic motif region spans residues 245–274 (KKIRRKIRNKQSAQESRKKKKEYIDGLETR). Residues 285–306 (LQRKVLHLEKQNLSLLEQLKKL) form a leucine-zipper region. Residue Lys294 forms a Glycyl lysine isopeptide (Lys-Gly) (interchain with G-Cter in ubiquitin) linkage. A helical; Signal-anchor for type II membrane protein transmembrane segment spans residues 323-343 (CVAVLLLSFALIILPSISPFG). Over 344–461 (PNKTESPGDF…AGLEAAGDEL (118 aa)) the chain is Lumenal. Residues 370–408 (RVAADAVPGSEAPGPRPEADTTREESPGSPGADWGFQDT) form a disordered region. The O-linked (GalNAc...) serine glycan is linked to Ser379. Residues 386 to 395 (PEADTTREES) show a composition bias toward basic and acidic residues. N-linked (GlcNAc...) asparagine glycosylation is found at Asn410, Asn413, Asn420, and Asn427. The tract at residues 442 to 461 (APGPSTGSGRAGLEAAGDEL) is disordered.

This sequence belongs to the bZIP family. ATF subfamily. Binds DNA as a dimer. May form homodimers. Interacts with ATF6. Interacts with SYNV1/HRD1; this interaction leads to CREB3L3 ubiquitination and proteasomal degradation. Controlled by regulated intramembrane proteolysis (RIP). Following ER stress a fragment containing the cytoplasmic transcription factor domain is released by proteolysis. The cleavage seems to be performed sequentially by site-1 and site-2 proteases (PS1 and PS2). In terms of processing, N- and O-glycosylated. N-glycosylation is required for optimal proteolytic activation. O-glycosylated with core 1 or possibly core 8 glycans. Post-translationally, ubiquitinated at Lys-294 by SYNV1/HRD1 via 'Lys-27'-linked ubiquitin. As to expression, exclusively expressed in liver. Underexpressed in hepatocellular carcinoma tissues.

Its subcellular location is the endoplasmic reticulum membrane. It is found in the nucleus. Functionally, transcription factor that may act during endoplasmic reticulum stress by activating unfolded protein response target genes. Activated in response to cAMP stimulation. In vitro, binds to the cAMP response element (CRE) and box-B element. Activates transcription through box-B element. Activates transcription through CRE. May function synergistically with ATF6. In acute inflammatory response, may activate expression of acute phase response (APR) genes. May be involved in growth suppression. Regulates FGF21 transcription. Plays a crucial role in the regulation of triglyceride metabolism and is required for the maintenance of normal plasma triglyceride concentrations. This is Cyclic AMP-responsive element-binding protein 3-like protein 3 (CREB3L3) from Homo sapiens (Human).